The primary structure comprises 66 residues: MDPPARKEKTKVKESVSRVEKAKQKSAQQELKQRQRAEIYALNRVMTELEQQQFDEFCKQMQPPGE.

The segment covering 1–23 (MDPPARKEKTKVKESVSRVEKAK) has biased composition (basic and acidic residues). The disordered stretch occupies residues 1 to 31 (MDPPARKEKTKVKESVSRVEKAKQKSAQQEL). A coiled-coil region spans residues 5–52 (ARKEKTKVKESVSRVEKAKQKSAQQELKQRQRAEIYALNRVMTELEQQ).

It belongs to the SVBP family. In terms of assembly, interacts with VASH1 and VASH2.

The protein localises to the cytoplasm. It is found in the secreted. Its subcellular location is the cytoskeleton. In terms of biological role, enhances the tyrosine carboxypeptidase activity of VASH1 and VASH2, thereby promoting the removal of the C-terminal tyrosine residue of alpha-tubulin. This activity is critical for spindle function and accurate chromosome segregation during mitosis since microtubule detyronisation regulates mitotic spindle length and postioning. Also required to enhance the solubility and secretion of VASH1 and VASH2. Plays a role in axon and excitatory synapse formation. This chain is Small vasohibin-binding protein, found in Homo sapiens (Human).